Consider the following 373-residue polypeptide: GDP-mannose 4,6-dehydratase (373 aa).

NADP(+) is bound by residues 9–14 (GVTGQD), 64–65 (DL), 86–90 (LGAMS), and tyrosine 101. Threonine 133 is an active-site residue. Active-site nucleophile residues include glutamate 135 and tyrosine 157. The NADP(+) site is built by lysine 161, histidine 187, and arginine 192.

This sequence belongs to the NAD(P)-dependent epimerase/dehydratase family. GDP-mannose 4,6-dehydratase subfamily. Requires NADP(+) as cofactor.

The enzyme catalyses GDP-alpha-D-mannose = GDP-4-dehydro-alpha-D-rhamnose + H2O. Its pathway is nucleotide-sugar biosynthesis; GDP-L-fucose biosynthesis via de novo pathway; GDP-L-fucose from GDP-alpha-D-mannose: step 1/2. Catalyzes the conversion of GDP-D-mannose to GDP-4-dehydro-6-deoxy-D-mannose. The chain is GDP-mannose 4,6-dehydratase from Escherichia coli O157:H7.